We begin with the raw amino-acid sequence, 496 residues long: Ribose import ATP-binding protein RbsA (496 aa).

ABC transporter domains lie at 3–239 (IVME…VGRE) and 246–493 (ERTP…TGGN). 35–42 (GENGAGKS) serves as a coordination point for ATP.

The protein belongs to the ABC transporter superfamily. Ribose importer (TC 3.A.1.2.1) family. In terms of assembly, the complex is composed of an ATP-binding protein (RbsA), two transmembrane proteins (RbsC) and a solute-binding protein (RbsB).

It localises to the cell membrane. The catalysed reaction is D-ribose(out) + ATP + H2O = D-ribose(in) + ADP + phosphate + H(+). Its function is as follows. Part of the ABC transporter complex RbsABC involved in ribose import. Responsible for energy coupling to the transport system. This is Ribose import ATP-binding protein RbsA from Oceanobacillus iheyensis (strain DSM 14371 / CIP 107618 / JCM 11309 / KCTC 3954 / HTE831).